Reading from the N-terminus, the 404-residue chain is Serine/threonine transporter SstT (404 aa).

The next 8 helical transmembrane spans lie at 17-37, 39-59, 75-95, 138-158, 179-199, 212-232, 287-307, and 313-333; these read IGIG…LTGF, ILGK…VFAL, MTLI…VAVL, ALAT…GLAL, IVVW…FTTI, FLIL…NPLI, IPLG…VLTL, and FGIP…AVSA.

Belongs to the dicarboxylate/amino acid:cation symporter (DAACS) (TC 2.A.23) family.

It localises to the cell membrane. The enzyme catalyses L-serine(in) + Na(+)(in) = L-serine(out) + Na(+)(out). It catalyses the reaction L-threonine(in) + Na(+)(in) = L-threonine(out) + Na(+)(out). In terms of biological role, involved in the import of serine and threonine into the cell, with the concomitant import of sodium (symport system). The polypeptide is Serine/threonine transporter SstT (Streptococcus pyogenes serotype M2 (strain MGAS10270)).